We begin with the raw amino-acid sequence, 89 residues long: Small ribosomal subunit protein uS15 (89 aa).

It belongs to the universal ribosomal protein uS15 family. As to quaternary structure, part of the 30S ribosomal subunit. Forms a bridge to the 50S subunit in the 70S ribosome, contacting the 23S rRNA.

Its function is as follows. One of the primary rRNA binding proteins, it binds directly to 16S rRNA where it helps nucleate assembly of the platform of the 30S subunit by binding and bridging several RNA helices of the 16S rRNA. Functionally, forms an intersubunit bridge (bridge B4) with the 23S rRNA of the 50S subunit in the ribosome. The chain is Small ribosomal subunit protein uS15 from Acidothermus cellulolyticus (strain ATCC 43068 / DSM 8971 / 11B).